Reading from the N-terminus, the 475-residue chain is Gustatory and pheromone receptor 33a (475 aa).

Over 1–34 (MIQIMNWFSMVIGLIPLNRQQSETNFILDYAMMC) the chain is Cytoplasmic. A helical transmembrane segment spans residues 35-55 (IVPIFYVACYLLINLSHIIGL). The Extracellular portion of the chain corresponds to 56-68 (CLLDSCNSVCKLS). Residues 69–89 (SHLFMHLGAFLYLTITLLSLY) traverse the membrane as a helical segment. Residues 90–128 (RRKEFFQQFDARLNDIDAVIQKCQRVAEMDKVKVTAVKH) lie on the Cytoplasmic side of the membrane. A helical transmembrane segment spans residues 129–149 (SVAYHFTWLFLFCVFTFALYY). The Extracellular portion of the chain corresponds to 150–158 (DVRSLYLTF). A helical membrane pass occupies residues 159 to 179 (GNLAFIPFMVSSFPYLAGSII). Over 180–319 (QGEFIYHVSV…LALSVITNGE (140 aa)) the chain is Cytoplasmic. The segment at 243-281 (TGFGNENKFAGEMKRQEGQQKNDDDDLDTSNDEDEDDFD) is disordered. Over residues 251 to 264 (FAGEMKRQEGQQKN) the composition is skewed to basic and acidic residues. Acidic residues predominate over residues 265-281 (DDDDLDTSNDEDEDDFD). Residues 320–340 (FGPQCVPYMAACFVVSIFGIF) form a helical membrane-spanning segment. The Extracellular portion of the chain corresponds to 341–357 (LETKVNFIVGGKSRLLD). The helical transmembrane segment at 358 to 378 (YMTYLYVIWSFTTMMVAYIVL) threads the bilayer. At 379–441 (RLCCNANNHS…FNGVGLFALD (63 aa)) the chain is on the cytoplasmic side. The chain crosses the membrane as a helical span at residues 442 to 462 (YTFIFSTVSAATSYLIVLLQF). Residues 463-475 (DMTAILRNEGLMS) lie on the Extracellular side of the membrane.

This sequence belongs to the insect chemoreceptor superfamily. Gustatory receptor (GR) family. Gr66a subfamily. As to expression, expressed widely in gustatory receptor neurons (GRNs) that respond to aversive chemicals. In larvae, is expressed in neurons of the terminal external chemosensory organ, and the dorsal, ventral and posterior external chemosensory organs.

The protein resides in the cell membrane. Gustatory receptor which mediates acceptance or avoidance behavior, depending on its substrates. Required for sensing all nonvolatile repulsive chemicals, including tastants, pheromones, and especially N,N-Diethyl-meta-toluamide (DEET), the most widely used insect repellent worldwide. Also functions as a pheromone receptor for a male inhibitory pheromone leading to male-male courtship suppression. This chain is Gustatory and pheromone receptor 33a (Gr33a), found in Drosophila melanogaster (Fruit fly).